The chain runs to 412 residues: Proteasome-activating nucleotidase 2 (412 aa).

Positions 28-74 (LRQHFERMVDVNRELDQRLQNADDRHAELVDEVDQMKARNEALKTAS) form a coiled coil. ATP is bound by residues 196 to 201 (GTGKTM) and His335. The interval 409 to 412 (DYQY) is docks into pockets in the proteasome alpha-ring to cause gate opening.

It belongs to the AAA ATPase family. Homohexamer. The hexameric complex has a two-ring architecture resembling a top hat that caps the 20S proteasome core at one or both ends. Upon ATP-binding, the C-terminus of PAN interacts with the alpha-rings of the proteasome core by binding to the intersubunit pockets.

Its subcellular location is the cytoplasm. In terms of biological role, ATPase which is responsible for recognizing, binding, unfolding and translocation of substrate proteins into the archaeal 20S proteasome core particle. Is essential for opening the gate of the 20S proteasome via an interaction with its C-terminus, thereby allowing substrate entry and access to the site of proteolysis. Thus, the C-termini of the proteasomal ATPase function like a 'key in a lock' to induce gate opening and therefore regulate proteolysis. Unfolding activity requires energy from ATP hydrolysis, whereas ATP binding alone promotes ATPase-20S proteasome association which triggers gate opening, and supports translocation of unfolded substrates. In Haloferax volcanii (strain ATCC 29605 / DSM 3757 / JCM 8879 / NBRC 14742 / NCIMB 2012 / VKM B-1768 / DS2) (Halobacterium volcanii), this protein is Proteasome-activating nucleotidase 2.